The primary structure comprises 171 residues: Adenine phosphoribosyltransferase (171 aa).

The protein belongs to the purine/pyrimidine phosphoribosyltransferase family. As to quaternary structure, homodimer.

Its subcellular location is the cytoplasm. It catalyses the reaction AMP + diphosphate = 5-phospho-alpha-D-ribose 1-diphosphate + adenine. It functions in the pathway purine metabolism; AMP biosynthesis via salvage pathway; AMP from adenine: step 1/1. In terms of biological role, catalyzes a salvage reaction resulting in the formation of AMP, that is energically less costly than de novo synthesis. The protein is Adenine phosphoribosyltransferase of Mycoplasmopsis fermentans (strain ATCC 19989 / NBRC 14854 / NCTC 10117 / PG18) (Mycoplasma fermentans).